A 501-amino-acid chain; its full sequence is Actin nucleation-promoting factor WASL (501 aa).

N-acetylserine is present on S2. Residues 31–138 enclose the WH1 domain; the sequence is LGKKCVTMSS…KAVTDLLGRR (108 aa). Residues 135-158 are disordered; that stretch reads LGRRQRKSEKRRDAPNGPNLPMAT. The CRIB domain maps to 200–213; the sequence is IGTPSNFQHIGHVG. Phosphoserine; by TNK2 is present on S239. Residue Y253 is modified to Phosphotyrosine; by FAK1 and TNK2. Disordered regions lie at residues 263–403 and 442–501; these read EAVK…GNKA and QLKS…EWED. Positions 273–387 are enriched in pro residues; that stretch reads APPPPPPSRG…PPGPPPPPGL (115 aa). Residue R304 is modified to Omega-N-methylarginine. WH2 domains follow at residues 401–418 and 429–446; these read NKAA…LKKV and GRDA…LKSV. The span at 442–453 shows a compositional bias: polar residues; that stretch reads QLKSVSDGQEST. A phosphoserine mark is found at S480 and S481. Residues 482–501 show a composition bias toward acidic residues; the sequence is DEDEDDDDEEDFEDDDEWED.

As to quaternary structure, binds actin and the Arp2/3 complex. Interacts with CDC42. Interacts with FCHSD1. Interacts with FCHSD2. Binds to SH3 domains of GRB2. Interacts with the C-terminal SH3 domain of DNMBP. Interacts with SNX9. Interacts with the WW domains of PRPF40A/FBP11. Interacts with PTK2/FAK1. Interacts with PACSIN1, PACSIN2 and PACSIN3. Interacts with NOSTRIN. Binds to TNK2. Interacts with SNX33. Interacts with NONO (via second RRM domain); the interaction is direct. Component of a multiprotein complex with NONO and SFPQ; associates with the complex via direct interaction with NONO. Post-translationally, phosphorylation at Ser-239, Tyr-253, Ser-480 and Ser-481 enhances actin polymerization activity.

It localises to the cytoplasm. Its subcellular location is the cytoskeleton. It is found in the nucleus. In terms of biological role, regulates actin polymerization by stimulating the actin-nucleating activity of the Arp2/3 complex. Involved in various processes, such as mitosis and cytokinesis, via its role in the regulation of actin polymerization. Together with CDC42, involved in the extension and maintenance of the formation of thin, actin-rich surface projections called filopodia. In addition to its role in the cytoplasm, also plays a role in the nucleus by regulating gene transcription, probably by promoting nuclear actin polymerization. Binds to HSF1/HSTF1 and forms a complex on heat shock promoter elements (HSE) that negatively regulates HSP90 expression. Plays a role in dendrite spine morphogenesis. The protein is Actin nucleation-promoting factor WASL (Wasl) of Mus musculus (Mouse).